The sequence spans 1466 residues: Immediate-early protein 2 (1466 aa).

8 disordered regions span residues 1–21 (MEPA…MQDY), 223–242 (NRGY…GGNG), 339–370 (YNHP…RGNQ), 428–472 (RCRS…VTKA), 517–965 (RSKT…TSIN), 1005–1068 (FRPH…CRSN), 1086–1179 (SRTR…SENA), and 1191–1223 (TTSH…DSSI). A compositionally biased stretch (polar residues) spans 339–350 (YNHPTKAQTIPE). The span at 428–437 (RCRSVQKKKE) shows a compositional bias: basic residues. Basic and acidic residues-rich tracts occupy residues 443-472 (NKHD…VTKA) and 536-553 (PTKD…DNYP). Polar residues-rich tracts occupy residues 583-595 (KNVS…TSPK) and 640-665 (KNHT…PTAF). Positions 666–681 (NKSNNNKSITNSTSNS) are enriched in low complexity. Residues 696–713 (NESKDPNRTCGKNSDKHL) show a composition bias toward basic and acidic residues. 2 stretches are compositionally biased toward low complexity: residues 720-756 (ASKR…SSRA) and 763-772 (RASSRAPSRA). The segment covering 773 to 790 (SSRDSSRASSRDSSRDSN) has biased composition (basic and acidic residues). A compositionally biased stretch (low complexity) spans 791 to 800 (RASSKASSRA). Residues 801-814 (SSRDSSRASSRDSS) are compositionally biased toward basic and acidic residues. Composition is skewed to low complexity over residues 826 to 884 (SRAS…SSRA) and 926 to 940 (SRAS…SSRA). The span at 955 to 965 (RQTPPHDTSIN) shows a compositional bias: polar residues. Positions 989–1037 (ARLQCFNHNDQFYNPRFRPHIRTNRKKSESTNDTDSESSMSRCKSHCRN) are interaction with human UBE2I. Low complexity-rich tracts occupy residues 1019 to 1029 (TNDTDSESSMS), 1053 to 1068 (GSSS…CRSN), and 1086 to 1110 (SRTR…STLK). The span at 1116-1131 (QNRDNKQIKSKSDSKH) shows a compositional bias: basic and acidic residues. A compositionally biased stretch (polar residues) spans 1162–1177 (HNSSPFNTHEQSNHSE). Over residues 1195–1213 (LHQKQNVKLHNTKKCKKKR) the composition is skewed to basic residues.

It belongs to the herpesviridae IE2 family. As to quaternary structure, interacts with human UBE2I in the nucleus. Although this interaction does not promote IE2 sumoylation, it represses transactivation activity.

The protein resides in the host nucleus. In terms of biological role, transcriptional transactivator. In Homo sapiens (Human), this protein is Immediate-early protein 2 (U90/U86).